Reading from the N-terminus, the 564-residue chain is Cytochrome c oxidase subunit 1 (564 aa).

A disordered region spans residues 1 to 23 (MTAVAPRLENYAEPTRPAPTGGA). Helical transmembrane passes span 43 to 63 (MMYI…ALLI), 83 to 103 (LFTL…VWGF), 122 to 142 (LNAF…AGFL), 171 to 191 (FWII…VNMI), 214 to 234 (IFVA…AALG), 259 to 279 (LFWF…FGIV), and 292 to 312 (FGYI…MAVW). H87 lines the Fe(II)-heme a pocket. H265 and Y269 together coordinate Cu cation. A cross-link (1'-histidyl-3'-tyrosine (His-Tyr)) is located at residues 265 to 269 (HPEVY). H314 and H315 together coordinate Cu cation. The next 2 membrane-spanning stretches (helical) occupy residues 316-336 (MFVT…LISV) and 360-380 (MTWT…GIML). H398 contributes to the heme a3 binding site. 3 helical membrane passes run 399 to 419 (FHYT…YFWF), 434 to 454 (IHFW…HWVG), and 477 to 497 (ISTV…WNVF). Residue H400 coordinates Fe(II)-heme a.

This sequence belongs to the heme-copper respiratory oxidase family. Associates with subunits II, III and IV to form cytochrome c oxidase. Cu(2+) serves as cofactor. Requires heme as cofactor.

The protein resides in the cell membrane. It catalyses the reaction 4 Fe(II)-[cytochrome c] + O2 + 8 H(+)(in) = 4 Fe(III)-[cytochrome c] + 2 H2O + 4 H(+)(out). It participates in energy metabolism; oxidative phosphorylation. Functionally, cytochrome c oxidase is the component of the respiratory chain that catalyzes the reduction of oxygen to water. Subunits 1-3 form the functional core of the enzyme complex. CO I is the catalytic subunit of the enzyme. Electrons originating in cytochrome c are transferred via the copper A center of subunit 2 and heme A of subunit 1 to the bimetallic center formed by heme A3 and copper B. The polypeptide is Cytochrome c oxidase subunit 1 (ctaD) (Corynebacterium diphtheriae (strain ATCC 700971 / NCTC 13129 / Biotype gravis)).